The following is a 137-amino-acid chain: Small ribosomal subunit protein uS9 (137 aa).

It belongs to the universal ribosomal protein uS9 family.

This is Small ribosomal subunit protein uS9 (rps9) from Saccharolobus solfataricus (strain ATCC 35092 / DSM 1617 / JCM 11322 / P2) (Sulfolobus solfataricus).